The following is a 42-amino-acid chain: Photosystem I reaction center subunit IX (42 aa).

A helical transmembrane segment spans residues 7–27; sequence FLSTAPVLIMALLTFTAGLLI.

Belongs to the PsaJ family.

It is found in the cellular thylakoid membrane. Its function is as follows. May help in the organization of the PsaE and PsaF subunits. The polypeptide is Photosystem I reaction center subunit IX (Rippkaea orientalis (strain PCC 8801 / RF-1) (Cyanothece sp. (strain PCC 8801))).